The primary structure comprises 310 residues: MSWTEIVIEVARTHAEALSDALMEAGALSVSVEDADFGTDAEQPLFGEPGMEPTEAAWEHSRVVALTPVEADQAAIVAEAAQAVGLAATDVAFTLRAVEEQDWVRLTQSQFEPIHIGKNIWVVPSWHDAPDPQALVLELDPGLAFGTGSHPTTRLCMEWLEAHPPVGLSVLDYGCGSGILAMVAAKLGSTDVIGIDIDPQAIKSALFNTERNHCEVAYYLPDEFASSGHAHTFDVVVANILANPLKVMAPMLSGRVKPGGKLILSGVLATQVEEVSAAYAPFIKLSVWAEHEGWVALAGQLPPGPESGQA.

S-adenosyl-L-methionine contacts are provided by T153, G174, D196, and N239.

Belongs to the methyltransferase superfamily. PrmA family.

It is found in the cytoplasm. The enzyme catalyses L-lysyl-[protein] + 3 S-adenosyl-L-methionine = N(6),N(6),N(6)-trimethyl-L-lysyl-[protein] + 3 S-adenosyl-L-homocysteine + 3 H(+). Its function is as follows. Methylates ribosomal protein L11. The protein is Ribosomal protein L11 methyltransferase of Janthinobacterium sp. (strain Marseille) (Minibacterium massiliensis).